Here is a 247-residue protein sequence, read N- to C-terminus: E3 ubiquitin-protein ligase RNF182 (247 aa).

The segment at 20-68 (CKICYNRYNLKQRKPKVLECCHRVCAKCLYKIIDFGDSPQGVIVCPFCR) adopts an RING-type zinc-finger fold. 2 helical membrane passes run 184–204 (VLVWLLGLLYFSSLPLGIYLL) and 211–231 (LGVVFVSLVPSSLVILMVYGF).

Interacts with ATP6V0C. Up-regulated in neuronal cells subjected to cell death-inducing injuries, such as oxygen and glucose deprivation (at protein level). Could be up-regulated in Alzheimer disease brains. Highly expressed in innate immune organs such as lymph nodes and spleen and in immune cells such as macrophages and dendritic cells.

Its subcellular location is the membrane. It localises to the cytoplasm. The enzyme catalyses S-ubiquitinyl-[E2 ubiquitin-conjugating enzyme]-L-cysteine + [acceptor protein]-L-lysine = [E2 ubiquitin-conjugating enzyme]-L-cysteine + N(6)-ubiquitinyl-[acceptor protein]-L-lysine.. It functions in the pathway protein modification; protein ubiquitination. E3 ubiquitin-protein ligase that mediates the ubiquitination of ATP6V0C and targets it to degradation via the ubiquitin-proteasome pathway. Also plays a role in the inhibition of TLR-triggered innate immune response by mediating 'Lys'-48-linked ubiquitination and subsequent degradation of NF-kappa-B component RELA. In Homo sapiens (Human), this protein is E3 ubiquitin-protein ligase RNF182 (RNF182).